Here is a 30-residue protein sequence, read N- to C-terminus: V-type proton ATPase catalytic subunit A isoform 1 (30 aa).

It belongs to the ATPase alpha/beta chains family. As to quaternary structure, V-ATPase is a heteromultimeric enzyme composed of a peripheral catalytic V1 complex (main components: subunits A, B, C, D, E, and F) attached to an integral membrane V0 proton pore complex (main component: the proteolipid protein).

The catalysed reaction is ATP + H2O + 4 H(+)(in) = ADP + phosphate + 5 H(+)(out). Catalytic subunit of the peripheral V1 complex of vacuolar ATPase. V-ATPase vacuolar ATPase is responsible for acidifying a variety of intracellular compartments in eukaryotic cells. This chain is V-type proton ATPase catalytic subunit A isoform 1, found in Psilotum nudum (Whisk fern).